The sequence spans 375 residues: Glutamate 5-kinase (375 aa).

Residue lysine 17 coordinates ATP. Substrate is bound by residues serine 58, aspartate 145, and asparagine 157. ATP-binding positions include 177 to 178 (SD) and 219 to 225 (TGGMVTK). Residues 281–359 (QGALTLDDGA…RELARELGPA (79 aa)) enclose the PUA domain.

This sequence belongs to the glutamate 5-kinase family.

Its subcellular location is the cytoplasm. The enzyme catalyses L-glutamate + ATP = L-glutamyl 5-phosphate + ADP. It participates in amino-acid biosynthesis; L-proline biosynthesis; L-glutamate 5-semialdehyde from L-glutamate: step 1/2. Catalyzes the transfer of a phosphate group to glutamate to form L-glutamate 5-phosphate. In Streptomyces avermitilis (strain ATCC 31267 / DSM 46492 / JCM 5070 / NBRC 14893 / NCIMB 12804 / NRRL 8165 / MA-4680), this protein is Glutamate 5-kinase.